The following is a 286-amino-acid chain: Lipoyl synthase (286 aa).

[4Fe-4S] cluster is bound by residues cysteine 34, cysteine 39, cysteine 45, cysteine 60, cysteine 64, cysteine 67, and serine 271. In terms of domain architecture, Radical SAM core spans tryptophan 46–serine 260.

Belongs to the radical SAM superfamily. Lipoyl synthase family. [4Fe-4S] cluster serves as cofactor.

The protein resides in the cytoplasm. It catalyses the reaction [[Fe-S] cluster scaffold protein carrying a second [4Fe-4S](2+) cluster] + N(6)-octanoyl-L-lysyl-[protein] + 2 oxidized [2Fe-2S]-[ferredoxin] + 2 S-adenosyl-L-methionine + 4 H(+) = [[Fe-S] cluster scaffold protein] + N(6)-[(R)-dihydrolipoyl]-L-lysyl-[protein] + 4 Fe(3+) + 2 hydrogen sulfide + 2 5'-deoxyadenosine + 2 L-methionine + 2 reduced [2Fe-2S]-[ferredoxin]. It participates in protein modification; protein lipoylation via endogenous pathway; protein N(6)-(lipoyl)lysine from octanoyl-[acyl-carrier-protein]: step 2/2. Catalyzes the radical-mediated insertion of two sulfur atoms into the C-6 and C-8 positions of the octanoyl moiety bound to the lipoyl domains of lipoate-dependent enzymes, thereby converting the octanoylated domains into lipoylated derivatives. The sequence is that of Lipoyl synthase from Picrophilus torridus (strain ATCC 700027 / DSM 9790 / JCM 10055 / NBRC 100828 / KAW 2/3).